Here is a 769-residue protein sequence, read N- to C-terminus: PDZ domain-containing protein 4 (769 aa).

Positions 130 to 214 (EVELYKSSHR…TNISLLVARP (85 aa)) constitute a PDZ domain. The disordered stretch occupies residues 221-315 (RWKDSDRDDF…TNTPGSLRKF (95 aa)). Residues 229–239 (DFLDDFGSENE) are compositionally biased toward acidic residues. At serine 236 the chain carries Phosphoserine. The span at 282 to 298 (RTDESTRNEESSEHDLL) shows a compositional bias: basic and acidic residues. A coiled-coil region spans residues 389 to 419 (VNRNESLGHEMAMLEEELRHLEFKCRNILRA). A disordered region spans residues 445 to 579 (ASEPKKHELS…RHRGQGQEGE (135 aa)). Over residues 447-467 (EPKKHELSDISELPEKSDKDS) the composition is skewed to basic and acidic residues. The residue at position 454 (serine 454) is a Phosphoserine. Residues 468-479 (TSAYNTGESCRS) show a composition bias toward polar residues. Basic and acidic residues predominate over residues 530–547 (LSRDPEAGRRQHAEERGR).

In terms of tissue distribution, brain-specific. Expressed in fetal and adult brain. Up-regulated in synovial carcinomas.

Its subcellular location is the cytoplasm. The protein resides in the cell cortex. In Homo sapiens (Human), this protein is PDZ domain-containing protein 4 (PDZD4).